The primary structure comprises 331 residues: Probable transcriptional regulatory protein At2g25830 (331 aa).

It belongs to the TACO1 family.

This chain is Probable transcriptional regulatory protein At2g25830, found in Arabidopsis thaliana (Mouse-ear cress).